The chain runs to 570 residues: Carotenoid cleavage dioxygenase 8, chloroplastic (570 aa).

Residues 1–56 (MASLITTKAMMSHHHVLSSTRITTLYSDNSIGDQQIKTKPQVPHRLFARRIFGVTR) constitute a chloroplast transit peptide. 4 residues coordinate Fe cation: H254, H305, H372, and H563.

Belongs to the carotenoid oxygenase family. Fe(2+) serves as cofactor. Expressed in flowers, siliques, inflorescence stems, petiole and leaves, and at a much higher level in roots.

It is found in the plastid. The protein resides in the chloroplast. The catalysed reaction is 9-cis-10'-apo-beta-carotenal + 2 O2 = (2E,4E,6E)-7-hydroxy-4-methylhepta-2,4,6-trienal + (11R)-carlactone. It carries out the reaction all-trans-10'-apo-beta-carotenal + O2 = (2E,4E,6E)-4-methylocta-2,4,6-trienedial + 13-apo-beta-carotenone. Involved in strigolactones biosynthesis by cleaving the C(27) 9-cis-10'-apo-beta-carotenal produced by CCD7. Produces the C(19) carlactone and a C(8) hydroxyaldehyde. Also shows lower activity with all-trans-10'-apo-beta-carotenal producing a C(9) dialdehyde and the C(18) 13-apo-beta-carotenone. Strigolactones are hormones that inhibit tillering and shoot branching through the MAX-dependent pathway, contribute to the regulation of shoot architectural response to phosphate-limiting conditions and function as rhizosphere signal that stimulates hyphal branching of arbuscular mycorrhizal fungi and trigger seed germination of root parasitic weeds. Also active on other carotenoid substrates like licopene or zeaxanthin. The protein is Carotenoid cleavage dioxygenase 8, chloroplastic of Arabidopsis thaliana (Mouse-ear cress).